Consider the following 391-residue polypeptide: Beta sliding clamp (391 aa).

It belongs to the beta sliding clamp family. Forms a ring-shaped head-to-tail homodimer around DNA which binds and tethers DNA polymerases and other proteins to the DNA. The DNA replisome complex has a single clamp-loading complex (3 tau and 1 each of delta, delta', psi and chi subunits) which binds 3 Pol III cores (1 core on the leading strand and 2 on the lagging strand) each with a beta sliding clamp dimer. Additional proteins in the replisome are other copies of gamma, psi and chi, Ssb, DNA helicase and RNA primase.

The protein localises to the cytoplasm. In terms of biological role, confers DNA tethering and processivity to DNA polymerases and other proteins. Acts as a clamp, forming a ring around DNA (a reaction catalyzed by the clamp-loading complex) which diffuses in an ATP-independent manner freely and bidirectionally along dsDNA. Initially characterized for its ability to contact the catalytic subunit of DNA polymerase III (Pol III), a complex, multichain enzyme responsible for most of the replicative synthesis in bacteria; Pol III exhibits 3'-5' exonuclease proofreading activity. The beta chain is required for initiation of replication as well as for processivity of DNA replication. This Synechocystis sp. (strain ATCC 27184 / PCC 6803 / Kazusa) protein is Beta sliding clamp (dnaN).